Here is a 97-residue protein sequence, read N- to C-terminus: Large ribosomal subunit protein uL23 (97 aa).

Belongs to the universal ribosomal protein uL23 family. Part of the 50S ribosomal subunit. Contacts protein L29, and trigger factor when it is bound to the ribosome.

Functionally, one of the early assembly proteins it binds 23S rRNA. One of the proteins that surrounds the polypeptide exit tunnel on the outside of the ribosome. Forms the main docking site for trigger factor binding to the ribosome. In Allorhizobium ampelinum (strain ATCC BAA-846 / DSM 112012 / S4) (Agrobacterium vitis (strain S4)), this protein is Large ribosomal subunit protein uL23.